An 859-amino-acid chain; its full sequence is Leucine--tRNA ligase (859 aa).

The short motif at 42–52 (PYPSGRLHMGH) is the 'HIGH' region element. The 'KMSKS' region signature appears at 618-622 (KMSKS). K621 serves as a coordination point for ATP.

It belongs to the class-I aminoacyl-tRNA synthetase family.

It is found in the cytoplasm. It carries out the reaction tRNA(Leu) + L-leucine + ATP = L-leucyl-tRNA(Leu) + AMP + diphosphate. This is Leucine--tRNA ligase from Shewanella baltica (strain OS155 / ATCC BAA-1091).